The chain runs to 1224 residues: A disintegrin and metalloproteinase with thrombospondin motifs 16 (1224 aa).

The N-terminal stretch at 1-24 is a signal peptide; the sequence is MKPRARGWRGLAALWMLLAQVAEQ. The propeptide occupies 25–279; sequence APACAMGPAA…EYKSCLRHKR (255 aa). Residues 31–53 are disordered; sequence GPAAAAPGSPSVPRPPPPAERPG. The segment covering 40 to 50 has biased composition (pro residues); it reads PSVPRPPPPAE. An N-linked (GlcNAc...) asparagine glycan is attached at Asn-156. Residues 247–254 carry the Cysteine switch motif; it reads HFCGRRKK. Cys-249 contacts Zn(2+). The 206-residue stretch at 290 to 495 folds into the Peptidase M12B domain; that stretch reads LNVETLVVVD…AQAICLADQP (206 aa). A glycan (N-linked (GlcNAc...) asparagine) is linked at Asn-310. 11 cysteine pairs are disulfide-bonded: Cys-366–Cys-417, Cys-392–Cys-399, Cys-411–Cys-490, Cys-450–Cys-474, Cys-518–Cys-543, Cys-529–Cys-550, Cys-538–Cys-569, Cys-563–Cys-574, Cys-598–Cys-635, Cys-602–Cys-640, and Cys-613–Cys-625. His-433 is a binding site for Zn(2+). Residue Glu-434 is part of the active site. The Zn(2+) site is built by His-437 and His-443. In terms of domain architecture, Disintegrin spans 496–585; sequence KPVKEYKYPE…KYGDEGPKPT (90 aa). A TSP type-1 1 domain is found at 586-641; it reads HGHWSDWSSWSPCSRTCGGGVSHRSRLCTNPKPSHGGKFCEGSTRTLKLCNSQKCP. Residues Asn-741, Asn-780, Asn-835, Asn-905, and Asn-935 are each glycosylated (N-linked (GlcNAc...) asparagine). Residues 747–873 form a spacer region; the sequence is IHRGLYTKHH…KQPPAQPSYT (127 aa). TSP type-1 domains are found at residues 874-922, 927-987, 988-1048, 1051-1115, and 1127-1181; these read WAIV…LVPC, CPPS…QSCP, PAWS…QRCH, KKLQ…LPCP, and RGSW…HFCP. Cystine bridges form between Cys-939–Cys-981, Cys-943–Cys-986, and Cys-954–Cys-970. Residues 1186-1223 enclose the PLAC domain; that stretch reads KDAFCKDYFHWCYLVPQHGMCSHKFYGKQCCKTCSKSN.

Zn(2+) serves as cofactor. Post-translationally, the precursor is cleaved by a furin endopeptidase. Glycosylated. Can be O-fucosylated by POFUT2 on a serine or a threonine residue found within the consensus sequence C1-X(2)-(S/T)-C2-G of the TSP type-1 repeat domains where C1 and C2 are the first and second cysteine residue of the repeat, respectively. Fucosylated repeats can then be further glycosylated by the addition of a beta-1,3-glucose residue by the glucosyltransferase, B3GALTL. Fucosylation mediates the efficient secretion of ADAMTS family members. Can also be C-glycosylated with one or two mannose molecules on tryptophan residues within the consensus sequence W-X-X-W of the TPRs, and N-glycosylated. These other glycosylations can also facilitate secretion. In terms of tissue distribution, expressed in fetal lung and kidney and in adult prostate and ovary.

Its subcellular location is the secreted. It is found in the extracellular space. The protein localises to the extracellular matrix. The polypeptide is A disintegrin and metalloproteinase with thrombospondin motifs 16 (ADAMTS16) (Homo sapiens (Human)).